A 103-amino-acid polypeptide reads, in one-letter code: Small ribosomal subunit protein uS10 (103 aa).

It belongs to the universal ribosomal protein uS10 family. In terms of assembly, part of the 30S ribosomal subunit.

Its function is as follows. Involved in the binding of tRNA to the ribosomes. The protein is Small ribosomal subunit protein uS10 of Campylobacter lari (strain RM2100 / D67 / ATCC BAA-1060).